The primary structure comprises 338 residues: Ketol-acid reductoisomerase (NADP(+)) (338 aa).

The KARI N-terminal Rossmann domain maps to 1 to 181; that stretch reads MNVYYDKDCD…GGGRSGIIET (181 aa). Residues 24-27, Arg-47, Ser-50, Ser-52, and 82-85 contribute to the NADP(+) site; these read YGSQ and DEFQ. His-107 is an active-site residue. Gly-133 contacts NADP(+). One can recognise a KARI C-terminal knotted domain in the interval 182-327; sequence TFKDETETDL…AKLRGMMPWI (146 aa). Residues Asp-190, Glu-194, Glu-226, and Glu-230 each contribute to the Mg(2+) site. Ser-251 contributes to the substrate binding site.

This sequence belongs to the ketol-acid reductoisomerase family. Mg(2+) serves as cofactor.

The enzyme catalyses (2R)-2,3-dihydroxy-3-methylbutanoate + NADP(+) = (2S)-2-acetolactate + NADPH + H(+). It catalyses the reaction (2R,3R)-2,3-dihydroxy-3-methylpentanoate + NADP(+) = (S)-2-ethyl-2-hydroxy-3-oxobutanoate + NADPH + H(+). It participates in amino-acid biosynthesis; L-isoleucine biosynthesis; L-isoleucine from 2-oxobutanoate: step 2/4. Its pathway is amino-acid biosynthesis; L-valine biosynthesis; L-valine from pyruvate: step 2/4. Functionally, involved in the biosynthesis of branched-chain amino acids (BCAA). Catalyzes an alkyl-migration followed by a ketol-acid reduction of (S)-2-acetolactate (S2AL) to yield (R)-2,3-dihydroxy-isovalerate. In the isomerase reaction, S2AL is rearranged via a Mg-dependent methyl migration to produce 3-hydroxy-3-methyl-2-ketobutyrate (HMKB). In the reductase reaction, this 2-ketoacid undergoes a metal-dependent reduction by NADPH to yield (R)-2,3-dihydroxy-isovalerate. The chain is Ketol-acid reductoisomerase (NADP(+)) from Psychrobacter arcticus (strain DSM 17307 / VKM B-2377 / 273-4).